Here is a 535-residue protein sequence, read N- to C-terminus: Probable galacturonosyltransferase 12 (535 aa).

The Cytoplasmic segment spans residues 1–37 (MQLHISPSLRHVTVVTGKGLREFIKVKVGSRRFSYQM). A helical; Signal-anchor for type II membrane protein membrane pass occupies residues 38-58 (VFYSLLFFTFLLRFVFVLSTV). Residues 59-535 (DTIDGDPSPC…FIKSCHIRAS (477 aa)) lie on the Lumenal side of the membrane. 2 N-linked (GlcNAc...) asparagine glycosylation sites follow: Asn-397 and Asn-430.

Belongs to the glycosyltransferase 8 family. As to expression, highly expressed in stems. Detected in roots, inflorescences, siliques, and leaves. Expressed in cells undergoing secondary wall thickening, including interfascicular fibers and primary and secondary xylem.

Its subcellular location is the golgi apparatus membrane. The protein operates within glycan metabolism; pectin biosynthesis. Functionally, involved in pectin assembly and/or distribution, and in the synthesis of secondary wall glucuronoxylan. Probably involved in the synthesis of the glycosyl sequence at the glucuronoxylan reducing end. May be involved in synthesis of a complex glycan primer for xylan synthesis. This chain is Probable galacturonosyltransferase 12 (GAUT12), found in Arabidopsis thaliana (Mouse-ear cress).